The following is a 952-amino-acid chain: Ent-kaur-16-ene synthase (952 aa).

Residues Asp-668, Glu-672, Asn-848, Asp-849, Ser-852, and Asp-856 each contribute to the Mg(2+) site. The DEXXE motif motif lies at 668-672 (DEYME).

Belongs to the terpene synthase family. Mg(2+) serves as cofactor.

It catalyses the reaction ent-copalyl diphosphate = ent-kaur-16-ene + diphosphate. It carries out the reaction (2E,6E,10E)-geranylgeranyl diphosphate = ent-copalyl diphosphate. It functions in the pathway plant hormone biosynthesis; gibberellin biosynthesis. Its function is as follows. Catalyzes the conversion of geranylgeranyl diphosphate to the gibberellin precursor ent-kaurene diphosphate in a two step process. The protein is Ent-kaur-16-ene synthase (cps) of Fusarium fujikuroi (Bakanae and foot rot disease fungus).